A 142-amino-acid polypeptide reads, in one-letter code: Baculoviral IAP repeat-containing protein 5 (142 aa).

One copy of the BIR repeat lies at 18–88; that stretch reads RISTFKNWPF…KHSSGCAFLS (71 aa). The residue at position 20 (Ser-20) is a Phosphoserine; by AURKC. An N6-acetyllysine modification is found at Lys-23. Thr-34 carries the phosphothreonine; by CDK1 and CDK15 modification. Thr-48 is modified (phosphothreonine). Zn(2+) is bound by residues Cys-57, Cys-60, His-77, and Cys-84. Residues Lys-90, Lys-110, Lys-112, and Lys-115 each carry the N6-acetyllysine modification. A Phosphothreonine; by AURKB modification is found at Thr-117. Lys-129 bears the N6-acetyllysine mark.

The protein belongs to the IAP family. In terms of assembly, monomer or homodimer. Exists as a homodimer in the apo state and as a monomer in the CPC-bound state. The monomer protects cells against apoptosis more efficiently than the dimer. Only the dimeric form is capable of enhancing tubulin stability in cells. When phosphorylated, interacts with LAMTOR5/HBXIP; the resulting complex binds pro-CASP9, as well as active CASP9, but much less efficiently. Component of the chromosomal passenger complex (CPC) composed of at least BIRC5/survivin, CDCA8/borealin, INCENP, AURKB or AURKC; in the complex forms a triple-helix bundle-based subcomplex with INCENP and CDCA8. Interacts with JTB. Interacts (via BIR domain) with histone H3 phosphorylated at 'Thr-3' (H3pT3). Interacts with EVI5. Interacts with GTP-bound RAN in both the S and M phases of the cell cycle. Interacts with USP9X. Interacts with tubulin. Interacts with BIRC2/c-IAP1. The acetylated form at Lys-129 interacts with STAT3. The monomeric form deacetylated at Lys-129 interacts with XPO1/CRM1. The monomeric form interacts with XIAP/BIRC4. Both the dimeric and monomeric form can interact with DIABLO/SMAC. Interacts with BIRC6/bruce. Interacts with FBXL7; this interaction facilitates the polyubiquitination and subsequent proteasomal degradation of BIRC5 by the SCF(FBXL7) E3 ubiquitin-protein ligase complex. In terms of processing, ubiquitinated by the Cul9-RING ubiquitin-protein ligase complex, leading to its degradation. Ubiquitination is required for centrosomal targeting. Deubiquitinated by USP35 or USP38; leading to stabilization. Post-translationally, acetylation at Lys-129 results in its homodimerization, while deacetylation promotes the formation of monomers which heterodimerize with XPO1/CRM1 which facilitates its nuclear export. The acetylated form represses STAT3 transactivation. The dynamic equilibrium between its acetylation and deacetylation at Lys-129 determines its interaction with XPO1/CRM1, its subsequent subcellular localization, and its ability to inhibit STAT3 transactivation. In vitro phosphorylation at Thr-117 by AURKB prevents interaction with INCENP and localization to mitotic chromosomes. Phosphorylation at Thr-48 by CK2 is critical for its mitotic and anti-apoptotic activities. Phosphorylation at Thr-34 by CDK15 is critical for its anti-apoptotic activity. Phosphorylation at Ser-20 by AURKC is critical for regulation of proper chromosome alignment and segregation, and possibly cytokinesis.

The protein resides in the cytoplasm. It localises to the nucleus. The protein localises to the chromosome. Its subcellular location is the centromere. It is found in the cytoskeleton. The protein resides in the spindle. It localises to the kinetochore. The protein localises to the midbody. In terms of biological role, multitasking protein that has dual roles in promoting cell proliferation and preventing apoptosis. Component of a chromosome passage protein complex (CPC) which is essential for chromosome alignment and segregation during mitosis and cytokinesis. Acts as an important regulator of the localization of this complex; directs CPC movement to different locations from the inner centromere during prometaphase to midbody during cytokinesis and participates in the organization of the center spindle by associating with polymerized microtubules. Involved in the recruitment of CPC to centromeres during early mitosis via association with histone H3 phosphorylated at 'Thr-3' (H3pT3) during mitosis. The complex with RAN plays a role in mitotic spindle formation by serving as a physical scaffold to help deliver the RAN effector molecule TPX2 to microtubules. May counteract a default induction of apoptosis in G2/M phase. The acetylated form represses STAT3 transactivation of target gene promoters. May play a role in neoplasia. Inhibitor of CASP3 and CASP7. Essential for the maintenance of mitochondrial integrity and function. The sequence is that of Baculoviral IAP repeat-containing protein 5 (BIRC5) from Pongo abelii (Sumatran orangutan).